An 89-amino-acid polypeptide reads, in one-letter code: Small ribosomal subunit protein uS15 (89 aa).

This sequence belongs to the universal ribosomal protein uS15 family. As to quaternary structure, part of the 30S ribosomal subunit. Forms a bridge to the 50S subunit in the 70S ribosome, contacting the 23S rRNA.

One of the primary rRNA binding proteins, it binds directly to 16S rRNA where it helps nucleate assembly of the platform of the 30S subunit by binding and bridging several RNA helices of the 16S rRNA. Functionally, forms an intersubunit bridge (bridge B4) with the 23S rRNA of the 50S subunit in the ribosome. This Nitratiruptor sp. (strain SB155-2) protein is Small ribosomal subunit protein uS15.